A 251-amino-acid polypeptide reads, in one-letter code: tRNA (guanine-N(1)-)-methyltransferase (251 aa).

Residues Gly113 and 133–138 (MGDYVL) each bind S-adenosyl-L-methionine.

It belongs to the RNA methyltransferase TrmD family. In terms of assembly, homodimer.

It is found in the cytoplasm. It catalyses the reaction guanosine(37) in tRNA + S-adenosyl-L-methionine = N(1)-methylguanosine(37) in tRNA + S-adenosyl-L-homocysteine + H(+). Specifically methylates guanosine-37 in various tRNAs. The polypeptide is tRNA (guanine-N(1)-)-methyltransferase (Sodalis glossinidius (strain morsitans)).